Reading from the N-terminus, the 329-residue chain is Beta-ketoacyl-[acyl-carrier-protein] synthase III (329 aa).

Active-site residues include cysteine 113 and histidine 255. The ACP-binding stretch occupies residues glutamine 256–arginine 260. Residue asparagine 285 is part of the active site.

This sequence belongs to the thiolase-like superfamily. FabH family. In terms of assembly, homodimer.

The protein localises to the cytoplasm. It catalyses the reaction malonyl-[ACP] + acetyl-CoA + H(+) = 3-oxobutanoyl-[ACP] + CO2 + CoA. It participates in lipid metabolism; fatty acid biosynthesis. Catalyzes the condensation reaction of fatty acid synthesis by the addition to an acyl acceptor of two carbons from malonyl-ACP. Catalyzes the first condensation reaction which initiates fatty acid synthesis and may therefore play a role in governing the total rate of fatty acid production. Possesses both acetoacetyl-ACP synthase and acetyl transacylase activities. Its substrate specificity determines the biosynthesis of branched-chain and/or straight-chain of fatty acids. This Chlorobium phaeovibrioides (strain DSM 265 / 1930) (Prosthecochloris vibrioformis (strain DSM 265)) protein is Beta-ketoacyl-[acyl-carrier-protein] synthase III.